The chain runs to 542 residues: Mitochondrial distribution and morphology protein 34 (542 aa).

One can recognise an SMP-LTD domain in the interval 1–216; the sequence is MSFRFNKGAF…LPSVIFSMSQ (216 aa). 2 disordered regions span residues 27–58 and 372–435; these read LNSK…TRGP and SSGD…TTAV. Over residues 31-48 the composition is skewed to low complexity; sequence TQSSSQTAPANTTNSAAT. Residues 49–58 show a composition bias toward basic and acidic residues; it reads DEVKQETRGP. Over residues 379 to 394 the composition is skewed to basic residues; sequence IRRRKIKMGKKSKSKK. The segment covering 403–414 has biased composition (low complexity); the sequence is SSPTVVMPSSPS.

The protein belongs to the MDM34 family. In terms of assembly, component of the ER-mitochondria encounter structure (ERMES) or MDM complex, composed of MMM1, MDM10, MDM12 and MDM34.

Its subcellular location is the mitochondrion outer membrane. Component of the ERMES/MDM complex, which serves as a molecular tether to connect the endoplasmic reticulum (ER) and mitochondria. Components of this complex are involved in the control of mitochondrial shape and protein biogenesis, and function in nonvesicular lipid trafficking between the ER and mitochondria. MDM34 is required for the interaction of the ER-resident membrane protein MMM1 and the outer mitochondrial membrane-resident beta-barrel protein MDM10. The protein is Mitochondrial distribution and morphology protein 34 of Lachancea thermotolerans (strain ATCC 56472 / CBS 6340 / NRRL Y-8284) (Yeast).